The sequence spans 126 residues: MSQVESPIKIKVDTQYLEQQSDVADNKYLFSYTITIINLGDNKVTLKDRHWIITDADGEQNEVKGPGVVGETPTIAPNTAYQYTSGTVMETPVGFMQGSYGMENHKGERFVATIPPFRLAVPGIFQ.

Residues 2–126 form the ApaG domain; it reads SQVESPIKIK…FRLAVPGIFQ (125 aa).

The protein is Protein ApaG of Shewanella frigidimarina (strain NCIMB 400).